The sequence spans 109 residues: Nucleoid-associated protein VS_0917 (109 aa).

2 disordered regions span residues 1-22 and 88-109; these read MFGK…ERMQ and QKEK…KMPF. Over residues 9–18 the composition is skewed to low complexity; the sequence is NMMKQAQQMQ.

It belongs to the YbaB/EbfC family. Homodimer.

The protein localises to the cytoplasm. It is found in the nucleoid. In terms of biological role, binds to DNA and alters its conformation. May be involved in regulation of gene expression, nucleoid organization and DNA protection. The protein is Nucleoid-associated protein VS_0917 of Vibrio atlanticus (strain LGP32) (Vibrio splendidus (strain Mel32)).